A 246-amino-acid chain; its full sequence is Biosynthetic peptidoglycan transglycosylase (246 aa).

The helical transmembrane segment at valine 27–isoleucine 47 threads the bilayer.

This sequence belongs to the glycosyltransferase 51 family.

The protein resides in the cell inner membrane. The enzyme catalyses [GlcNAc-(1-&gt;4)-Mur2Ac(oyl-L-Ala-gamma-D-Glu-L-Lys-D-Ala-D-Ala)](n)-di-trans,octa-cis-undecaprenyl diphosphate + beta-D-GlcNAc-(1-&gt;4)-Mur2Ac(oyl-L-Ala-gamma-D-Glu-L-Lys-D-Ala-D-Ala)-di-trans,octa-cis-undecaprenyl diphosphate = [GlcNAc-(1-&gt;4)-Mur2Ac(oyl-L-Ala-gamma-D-Glu-L-Lys-D-Ala-D-Ala)](n+1)-di-trans,octa-cis-undecaprenyl diphosphate + di-trans,octa-cis-undecaprenyl diphosphate + H(+). The protein operates within cell wall biogenesis; peptidoglycan biosynthesis. Functionally, peptidoglycan polymerase that catalyzes glycan chain elongation from lipid-linked precursors. This is Biosynthetic peptidoglycan transglycosylase from Haemophilus influenzae (strain ATCC 51907 / DSM 11121 / KW20 / Rd).